Consider the following 497-residue polypeptide: Trichoplein keratin filament-binding protein (497 aa).

3 coiled-coil regions span residues 67–140 (HCEK…LLYE), 166–271 (ATQK…ELGR), and 327–479 (MKQV…AKTM). The segment at 72–457 (KEEKRKILEL…WEAARQEEEE (386 aa)) is interaction with keratin proteins. The tract at residues 167–188 (TQKEEKKQQEATEKQENKRLEN) is disordered. Over residues 168–188 (QKEEKKQQEATEKQENKRLEN) the composition is skewed to basic and acidic residues. Residues 258-424 (RQMAALRRKT…KQLAQRAKEE (167 aa)) form a trichohyalin/plectin homology domain region. Residues 441–497 (AERQGQEWEAARQEEEEEEEARQAEEHSNALLQQEAKTMAEKGYQPKLHGHLRIAWD) form a disordered region. Residues 444-453 (QGQEWEAARQ) show a composition bias toward basic and acidic residues. The span at 488 to 497 (LHGHLRIAWD) shows a compositional bias: basic residues.

This sequence belongs to the TCHP family. In terms of assembly, interacts specifically with keratin proteins including, KRT5, KRT6A, KRT8, KRT14, KRT16 and KRT18. Interacts with KCTD17. In terms of processing, ubiquitinated. Ubiquitination by the BCR(KCTD17) E3 ubiquitin ligase complex results in proteasomal degradation, and induces ciliogenesis. As to expression, expressed in all tissues examined, including brain, liver, small intestine, large intestine, lung and heart. Found concentrated in tubular structures within hepatocytes, and in the apical cortical region and desmosomes of the apical junctional domain in enterocytes of the small intestine. In the hair follicle, localized at the outer root sheath. Also expressed in blood vessels (at protein level).

The protein localises to the cytoplasm. Its subcellular location is the cytoskeleton. It is found in the cell membrane. It localises to the mitochondrion. The protein resides in the microtubule organizing center. The protein localises to the centrosome. Functionally, tumor suppressor which has the ability to inhibit cell growth and be pro-apoptotic during cell stress. May act as a 'capping' or 'branching' protein for keratin filaments in the cell periphery. May regulate K8/K18 filament and desmosome organization mainly at the apical or peripheral regions of simple epithelial cells. Is a negative regulator of ciliogenesis. This is Trichoplein keratin filament-binding protein from Mus musculus (Mouse).